A 790-amino-acid chain; its full sequence is Cadherin-18 (790 aa).

Positions 1–24 (MKITSTSCICPVLVCLCFVQRCYG) are cleaved as a signal peptide. A propeptide spanning residues 25 to 53 (TAHHSSIKVMRNQTKHIEGETEVHHRPKR) is cleaved from the precursor. N-linked (GlcNAc...) asparagine glycosylation is present at N36. Cadherin domains follow at residues 54-159 (GWVW…APKF), 160-268 (TDGP…PPRF), 269-383 (PQKH…PPLF), 384-486 (SMPS…DNPP), and 487-608 (ELAR…FLSS). Residues 54–608 (GWVWNQFFVL…TCHAEAFLSS (555 aa)) lie on the Extracellular side of the membrane. Residue N255 is glycosylated (N-linked (GlcNAc...) asparagine). N-linked (GlcNAc...) asparagine glycosylation is found at N455 and N536. Residues 609 to 636 (AGLSTGALIAILLCVLILLAIVVLFITL) form a helical membrane-spanning segment. Residues 637–790 (RRSKKEPLII…YGEIESERTT (154 aa)) lie on the Cytoplasmic side of the membrane. S786 carries the phosphoserine modification.

It localises to the cell membrane. Its function is as follows. Cadherins are calcium-dependent cell adhesion proteins. They preferentially interact with themselves in a homophilic manner in connecting cells; cadherins may thus contribute to the sorting of heterogeneous cell types. This chain is Cadherin-18 (CDH18), found in Homo sapiens (Human).